Consider the following 505-residue polypeptide: uncharacterized protein (505 aa).

Residue H431 is the Proton acceptor of the active site.

This sequence belongs to the GMC oxidoreductase family. FAD is required as a cofactor.

This is an uncharacterized protein from Sinorhizobium fredii (strain NBRC 101917 / NGR234).